A 174-amino-acid polypeptide reads, in one-letter code: Crossover junction endodeoxyribonuclease RuvC (174 aa).

Catalysis depends on residues D16, E76, and D148. D16, E76, and D148 together coordinate Mg(2+).

Belongs to the RuvC family. Homodimer which binds Holliday junction (HJ) DNA. The HJ becomes 2-fold symmetrical on binding to RuvC with unstacked arms; it has a different conformation from HJ DNA in complex with RuvA. In the full resolvosome a probable DNA-RuvA(4)-RuvB(12)-RuvC(2) complex forms which resolves the HJ. The cofactor is Mg(2+).

Its subcellular location is the cytoplasm. The enzyme catalyses Endonucleolytic cleavage at a junction such as a reciprocal single-stranded crossover between two homologous DNA duplexes (Holliday junction).. Its function is as follows. The RuvA-RuvB-RuvC complex processes Holliday junction (HJ) DNA during genetic recombination and DNA repair. Endonuclease that resolves HJ intermediates. Cleaves cruciform DNA by making single-stranded nicks across the HJ at symmetrical positions within the homologous arms, yielding a 5'-phosphate and a 3'-hydroxyl group; requires a central core of homology in the junction. The consensus cleavage sequence is 5'-(A/T)TT(C/G)-3'. Cleavage occurs on the 3'-side of the TT dinucleotide at the point of strand exchange. HJ branch migration catalyzed by RuvA-RuvB allows RuvC to scan DNA until it finds its consensus sequence, where it cleaves and resolves the cruciform DNA. The protein is Crossover junction endodeoxyribonuclease RuvC of Rhodopseudomonas palustris (strain ATCC BAA-98 / CGA009).